The primary structure comprises 544 residues: NADH-quinone oxidoreductase subunit C/D (544 aa).

Positions 1-138 (MLNCDMLIDS…KGQICTETED (138 aa)) are NADH dehydrogenase I subunit C. The NADH dehydrogenase I subunit D stretch occupies residues 161 to 544 (MLLNVGPSHP…MNFIAGEFDR (384 aa)).

The protein in the N-terminal section; belongs to the complex I 30 kDa subunit family. In the C-terminal section; belongs to the complex I 49 kDa subunit family. As to quaternary structure, NDH-1 is composed of 13 different subunits. Subunits NuoB, CD, E, F, and G constitute the peripheral sector of the complex.

It localises to the cell inner membrane. It catalyses the reaction a quinone + NADH + 5 H(+)(in) = a quinol + NAD(+) + 4 H(+)(out). Functionally, NDH-1 shuttles electrons from NADH, via FMN and iron-sulfur (Fe-S) centers, to quinones in the respiratory chain. The immediate electron acceptor for the enzyme in this species is believed to be ubiquinone. Couples the redox reaction to proton translocation (for every two electrons transferred, four hydrogen ions are translocated across the cytoplasmic membrane), and thus conserves the redox energy in a proton gradient. The chain is NADH-quinone oxidoreductase subunit C/D from Aliarcobacter butzleri (strain RM4018) (Arcobacter butzleri).